The primary structure comprises 219 residues: 2-hydroxy-3-keto-5-methylthiopentenyl-1-phosphate phosphatase (219 aa).

The protein belongs to the HAD-like hydrolase superfamily. MtnX family.

It carries out the reaction 2-hydroxy-5-methylsulfanyl-3-oxopent-1-enyl phosphate + H2O = 1,2-dihydroxy-5-(methylsulfanyl)pent-1-en-3-one + phosphate. Its pathway is amino-acid biosynthesis; L-methionine biosynthesis via salvage pathway; L-methionine from S-methyl-5-thio-alpha-D-ribose 1-phosphate: step 4/6. Its function is as follows. Dephosphorylates 2-hydroxy-3-keto-5-methylthiopentenyl-1-phosphate (HK-MTPenyl-1-P) yielding 1,2-dihydroxy-3-keto-5-methylthiopentene (DHK-MTPene). In Bacillus thuringiensis subsp. konkukian (strain 97-27), this protein is 2-hydroxy-3-keto-5-methylthiopentenyl-1-phosphate phosphatase.